We begin with the raw amino-acid sequence, 958 residues long: MRTHTRGAPSVFFICLFCFVSACVTDENPEVMIPFTNANYDSHPMLYFSRAEVAELQLRAASSHEHIAARLTEAVNTMLSSPLEYLPPWDPKEYSARWNEIYGNNLGALAMFCVLYPENMEARDMAKDYMERMAAQPSWLVKDAPWDEVPLAHSLVGFATAYDFLYNYLSKTQQEKFLEVIANASGYMYETSYRRGWGFQYLHNHQPTNCMALLTGSLVLMNQGYLQEAYLWTKQVLTIMEKSLVLLREVTDGSLYEGVAYGSYTTRSLFQYMFLVQRHFDINHFGHPWLKQHFAFMYRTILPGFQRTVAIADSNYNWFYGPESQLVFLDKFVMRNGSGNWLADQIRRNRVVEGPGTPSKGQRWCTLHTEFLWYDASLKSVPPPDFGTPTLHYFEDWGVVTYGSALPAEINRSFLSFKSGKLGGRAIYDIVHRNKYKDWIKGWRNFNAGHEHPDQNSFTFAPNGVPFITEALYGPKYTFFNNVLMFSPAASKSCFSPWEGQVTEDCSSKWSKYKHDPAASCQGRVVAAVEKNGVVFIRGEGVGAYNPQLHLRNVQRNLILLHPQLLLLVDQIHLGEDSPLERAASFFHNVDFPFEETVVDGVHGALIRQRDGLYKMYWMDDTGYSEKGTFASVTYPRGYPYNGTNYVNVTTHLRSPVTRAAYLFIGPSIDVQSFSIHGDAQQLDVFVATSEHAYATYLWTGETAGQSAFAQVIADRQKILFDRSSAIRSSVVPEVKDYAALVEQNLQHFKPVFQLLEKQILSRVRNTASFRKTAERLLRFSDKRQTEEAIDRIFAISQQQQQQQSKSKKNRRGGKRYKFVDAVPDIFAQIEVNERKVRQKAQILAQKELPVDEDEEMKDLLDFADITYEKHKNGDVMNGRFGQARMVTTHSRAPALSASYTRLFLILNIAIFFVMLAMQLTYFQRAQSLHGQRCLYAVLLIDSCILLWLYSSCSQSQC.

The N-terminal stretch at 1-22 is a signal peptide; that stretch reads MRTHTRGAPSVFFICLFCFVSA. Residues 23-902 are Lumenal-facing; that stretch reads CVTDENPEVM…APALSASYTR (880 aa). The N-linked (GlcNAc...) asparagine glycan is linked to asparagine 183. Histidine 205 (proton donor) is an active-site residue. Tyrosine 261 is an active-site residue. N-linked (GlcNAc...) asparagine glycans are attached at residues asparagine 336 and asparagine 411. Histidine 452 and glutamate 470 together coordinate Mn(2+). Tyrosine 473 is an active-site residue. A Mn(2+)-binding site is contributed by asparagine 481. N-linked (GlcNAc...) asparagine glycosylation is found at asparagine 642 and asparagine 648. The chain crosses the membrane as a helical span at residues 903-923; sequence LFLILNIAIFFVMLAMQLTYF. At 924–933 the chain is on the cytoplasmic side; the sequence is QRAQSLHGQR. The helical transmembrane segment at 934–954 threads the bilayer; sequence CLYAVLLIDSCILLWLYSSCS. The Lumenal portion of the chain corresponds to 955 to 958; that stretch reads QSQC.

This sequence belongs to the dermatan-sulfate isomerase family. Mn(2+) serves as cofactor. In terms of processing, N-glycosylated. Glycosylation is important for enzymatic activity.

It is found in the endoplasmic reticulum membrane. It localises to the golgi apparatus membrane. The protein resides in the cytoplasmic vesicle membrane. Its subcellular location is the microsome membrane. It catalyses the reaction chondroitin 4'-sulfate = dermatan 4'-sulfate. Its pathway is glycan metabolism; chondroitin sulfate biosynthesis. The protein operates within glycan metabolism; heparan sulfate biosynthesis. In terms of biological role, converts D-glucuronic acid to L-iduronic acid (IdoUA) residues. Plays an important role in the biosynthesis of the glycosaminoglycan/mucopolysaccharide dermatan sulfate. In Bos taurus (Bovine), this protein is Dermatan-sulfate epimerase (DSE).